We begin with the raw amino-acid sequence, 76 residues long: Beta-defensin 121 (76 aa).

The signal sequence occupies residues 1-15; sequence MKLLLLLLTVTLLLA. 3 disulfides stabilise this stretch: Cys23–Cys50, Cys30–Cys44, and Cys34–Cys51.

This sequence belongs to the beta-defensin family.

The protein localises to the secreted. Has antibacterial activity. This is Beta-defensin 121 (DEFB121) from Pan troglodytes (Chimpanzee).